The following is a 242-amino-acid chain: Ribosomal RNA small subunit methyltransferase G (242 aa).

S-adenosyl-L-methionine is bound by residues Gly-79, Phe-84, 130–131 (AE), and Arg-150.

The protein belongs to the methyltransferase superfamily. RNA methyltransferase RsmG family.

The protein localises to the cytoplasm. Specifically methylates the N7 position of a guanine in 16S rRNA. This chain is Ribosomal RNA small subunit methyltransferase G, found in Levilactobacillus brevis (strain ATCC 367 / BCRC 12310 / CIP 105137 / JCM 1170 / LMG 11437 / NCIMB 947 / NCTC 947) (Lactobacillus brevis).